The following is a 513-amino-acid chain: ATP synthase subunit alpha (513 aa).

G169–T176 is an ATP binding site.

The protein belongs to the ATPase alpha/beta chains family. In terms of assembly, F-type ATPases have 2 components, CF(1) - the catalytic core - and CF(0) - the membrane proton channel. CF(1) has five subunits: alpha(3), beta(3), gamma(1), delta(1), epsilon(1). CF(0) has three main subunits: a(1), b(2) and c(9-12). The alpha and beta chains form an alternating ring which encloses part of the gamma chain. CF(1) is attached to CF(0) by a central stalk formed by the gamma and epsilon chains, while a peripheral stalk is formed by the delta and b chains.

It localises to the cell inner membrane. It carries out the reaction ATP + H2O + 4 H(+)(in) = ADP + phosphate + 5 H(+)(out). Its function is as follows. Produces ATP from ADP in the presence of a proton gradient across the membrane. The alpha chain is a regulatory subunit. The chain is ATP synthase subunit alpha from Proteus mirabilis (strain HI4320).